The sequence spans 343 residues: Interferon-inducible protein AIM2 (343 aa).

In terms of domain architecture, Pyrin spans 1-87; that stretch reads MESKYKEILL…AKRLQEEKEK (87 aa). In terms of domain architecture, HIN-200 spans 138-337; it reads MVAQQESIRE…SGVHSTIKVI (200 aa).

Belongs to the HIN-200 family. Self-associates; forms homooligomers in response to cytosolic double-stranded DNA (dsDNA) and the dsDNA seems to serve as oligomerization platform. Component of AIM2 inflammasome, which consists of a signal sensor component (AIM2), an adapter (PYCARD/ASC), which recruits an effector pro-inflammatory caspase (CASP1). Interacts (via pyrin domain) with PYCARD/ASC (via pyrin domain); interaction is direct. Component of the AIM2 PANoptosome complex, a multiprotein complex that drives inflammatory cell death (PANoptosis). Interacts with PYDC5; disrupts assembly of the AIM2 inflammasome complex. Interacts with EIF2AK2/PKR. Interacts with MAPRE1. Interacts with IFI16. Interacts with isoform IFI16-beta of IFI16; preventing the interaction between AIM2 and PYCARD/ASC. Interacts with RACK1; promoting association with PP2A phosphatase and dephosphorylation of AKT1. Interacts with TRIM11; promoting AIM2 recruitment to autophagosomes and autophagy-dependent degradation. As to quaternary structure, (Microbial infection) Interacts with human herpesvirus 8 protein SOX/ORF37; this interaction inhibits AIM2 polymerization and subsequent inflammasome activation. Post-translationally, degraded via selective autophagy following interaction with TRIM11. As to expression, expressed in spleen, small intestine, peripheral blood leukocytes, and testis.

It is found in the cytoplasm. The protein resides in the inflammasome. It localises to the nucleus. With respect to regulation, inactive in absence of double-stranded DNA (dsDNA). Homooligomerizes upon binding to dsDNA, dsDNA serving as an oligomerization platform. AIM2 requires large dsDNA to generate a structural template that couples dsDNA ligand-binding and homooligomerization. Homooligomerization is followed by recruitment of PYCARD/ASC to initiate speck formation (nucleation). AIM2 and PYCARD/ASC homooligomer filaments assemble bidirectionally and the recognition between AIM2 and PYCARD/ASC oligomers occurs in a head-to-tail manner. Clustered PYCARD/ASC nucleates the formation of CASP1 filaments through the interaction of their respective CARD domains, acting as a platform for CASP1 polymerization and activation. Active CASP1 then specifically processes protein precursors, such as gasdermin-D (GSDMD), IL1B and IL18, leading to the release of mature cytokines in the extracellular milieu or pyroptosis, depending on cell type. AIM2 can be activated in response to events that cause genomic DNA (HIV protease inhibitor nelfinavir) or mitochondrial DNA release in the cytoplasm (such as Perfluoroalkyl substance pollutants or cholesterol overload). Activation of the AIM2 inflammasome is inhibited by isoform IFI16-beta of IFI16, which prevents the interaction between AIM2 and PYCARD/ASC. Activation of the AIM2 inflammasome is inhibited by TRIM11, which promotes autophagy-dependent degradation of AIM2. Functionally, sensor component of the AIM2 inflammasome, which mediates inflammasome activation in response to the presence of double-stranded DNA (dsDNA) in the cytosol, leading to subsequent pyroptosis. Inflammasomes are supramolecular complexes that assemble in the cytosol in response to pathogens and other damage-associated signals and play critical roles in innate immunity and inflammation. Acts as a recognition receptor (PRR): specifically recognizes and binds dsDNA in the cytosol, and mediates the formation of the inflammasome polymeric complex composed of AIM2, CASP1 and PYCARD/ASC. Recruitment of pro-caspase-1 (proCASP1) to the AIM2 inflammasome promotes caspase-1 (CASP1) activation, which subsequently cleaves and activates inflammatory cytokines IL1B and IL18 and gasdermin-D (GSDMD), promoting cytokine secretion. In some cells, CASP1 activation mediates cleavage and activation of GSDMD, triggering pyroptosis without promoting cytokine secretion. Detects cytosolic dsDNA of viral and bacterial origin in a non-sequence-specific manner. Involved in the DNA damage response caused by acute ionizing radiation by mediating pyroptosis of intestinal epithelial cells and bone marrow cells in response to double-strand DNA breaks. Mechanistically, AIM2 senses DNA damage in the nucleus to mediate inflammasome assembly and inflammatory cell death. Also acts as a regulator of neurodevelopment via its role in the DNA damage response: acts by promoting neural cell death in response to DNA damage in the developing brain, thereby purging genetically compromised cells of the central nervous system. Pyroptosis mediated by the AIM2 inflammasome in response to DNA damage is dependent on GSDMD without involving IL1B and IL18 cytokine secretion. Also acts as a mediator of pyroptosis, necroptosis and apoptosis (PANoptosis), an integral part of host defense against pathogens, in response to bacterial infection. Can also trigger PYCARD/ASC-dependent, caspase-1-independent cell death that involves caspase-8 (CASP8). In terms of biological role, also acts as a tumor suppressor independently of its role in inflammatory response. Able to suppress overt cell proliferation in enterocytes: restricts stem cell proliferation in the intestinal mucosa in an inflammasome-independent manner, contributing to a decrease in the likelihood of colorectal cancer development. AIM2 suppresses cell proliferation by inhibiting phosphorylation of AKT1 at 'Ser-473', preventing AKT1 activation and AKT-mTOR signaling pathway. Inhibits AKT1 phosphorylation both by inhibiting the activity of PRKDC/DNA-PK kinase and promoting dephosphorylation by PP2A phosphatase. Also acts as a key regulator of regulatory T-cells (Treg) homeostasis by promoting their stability: acts by preventing AKT1 activation. Its role in Treg homeostasis is important to restain autoimmune diseases. The sequence is that of Interferon-inducible protein AIM2 from Homo sapiens (Human).